The primary structure comprises 507 residues: ATP synthase subunit alpha (507 aa).

169–176 (GDRQIGKT) serves as a coordination point for ATP.

Belongs to the ATPase alpha/beta chains family. In terms of assembly, F-type ATPases have 2 components, CF(1) - the catalytic core - and CF(0) - the membrane proton channel. CF(1) has five subunits: alpha(3), beta(3), gamma(1), delta(1), epsilon(1). CF(0) has three main subunits: a(1), b(2) and c(9-12). The alpha and beta chains form an alternating ring which encloses part of the gamma chain. CF(1) is attached to CF(0) by a central stalk formed by the gamma and epsilon chains, while a peripheral stalk is formed by the delta and b chains.

The protein localises to the cell inner membrane. It carries out the reaction ATP + H2O + 4 H(+)(in) = ADP + phosphate + 5 H(+)(out). Functionally, produces ATP from ADP in the presence of a proton gradient across the membrane. The alpha chain is a regulatory subunit. In Desulfotalea psychrophila (strain LSv54 / DSM 12343), this protein is ATP synthase subunit alpha.